Consider the following 357-residue polypeptide: MDEADEGRSLRRGWTTGACATAALKAALEALVDRPFPDPVALTLPRGERPAFALATRETGPGWARAGVIKDAGDDPDVTHGALIEATARLLPKGSGLIFRAGSGVGTVTKPGLPLAVGEPAINPVPRAMMTEVATAAGLADLEISIAVAQGASIALRTWNPRLGILGGLSILGTTGVVVPYSCSAWIHSIRRGVDVARATGRAHVVGTTGATSERAALDHLGLDAEAVIDMGDFVGGLLKYLRDHPIPHLTIAGGFAKLSKLADGALDLHSKRAQVDIPALARRLAALGATQAVVSEAERANTALEVLTLAQAAGLPLATAIAFEAATVARAVLGEAPVRVSVLVVDRGGRVVGEGG.

Belongs to the CbiD family.

It catalyses the reaction Co-precorrin-5B + S-adenosyl-L-methionine = Co-precorrin-6A + S-adenosyl-L-homocysteine. It functions in the pathway cofactor biosynthesis; adenosylcobalamin biosynthesis; cob(II)yrinate a,c-diamide from sirohydrochlorin (anaerobic route): step 6/10. Its function is as follows. Catalyzes the methylation of C-1 in cobalt-precorrin-5B to form cobalt-precorrin-6A. This is Cobalt-precorrin-5B C(1)-methyltransferase from Rhodospirillum rubrum (strain ATCC 11170 / ATH 1.1.1 / DSM 467 / LMG 4362 / NCIMB 8255 / S1).